The chain runs to 264 residues: TLC domain-containing protein 4-B (264 aa).

A run of 6 helical transmembrane segments spans residues 6-26 (VYVVAGSFVGFQLFFSCVSPV), 50-70 (LVSTVHALIVGLFCLYILWYD), 84-104 (LVKLNVAITCGYLFYDLLLLA), 110-130 (MGDVFFVCHHLAALYAYGYVL), 169-189 (LVVANGIAMAVVFFLVRIAVM), and 210-230 (LAIQVAWIISCVCLDILNIIW). Residues 41-243 (NKLNDWNSRL…IARGCYKVIT (203 aa)) form the TLC domain.

Belongs to the TLCD4 family.

Its subcellular location is the membrane. The polypeptide is TLC domain-containing protein 4-B (tlcd4b) (Danio rerio (Zebrafish)).